Consider the following 266-residue polypeptide: Tryptophan synthase alpha chain (266 aa).

Active-site proton acceptor residues include Glu-49 and Asp-60.

This sequence belongs to the TrpA family. As to quaternary structure, tetramer of two alpha and two beta chains.

It carries out the reaction (1S,2R)-1-C-(indol-3-yl)glycerol 3-phosphate + L-serine = D-glyceraldehyde 3-phosphate + L-tryptophan + H2O. The protein operates within amino-acid biosynthesis; L-tryptophan biosynthesis; L-tryptophan from chorismate: step 5/5. Its function is as follows. The alpha subunit is responsible for the aldol cleavage of indoleglycerol phosphate to indole and glyceraldehyde 3-phosphate. The sequence is that of Tryptophan synthase alpha chain from Thioalkalivibrio sulfidiphilus (strain HL-EbGR7).